Consider the following 82-residue polypeptide: Small ribosomal subunit protein bS16 (82 aa).

It belongs to the bacterial ribosomal protein bS16 family.

This is Small ribosomal subunit protein bS16 from Mannheimia succiniciproducens (strain KCTC 0769BP / MBEL55E).